Consider the following 478-residue polypeptide: F-box protein YDR306C (478 aa).

Positions 1-14 (MANKSRPKKIKAPY) are enriched in basic residues. 2 disordered regions span residues 1–32 (MANKSRPKKIKAPYRKYVAGEGFSSTRNDNKA) and 67–101 (RLSNEKKDKKGRKQSPSSSSTSSSKGEKNGKVIES). The span at 80–90 (QSPSSSSTSSS) shows a compositional bias: low complexity. Residues 91 to 101 (KGEKNGKVIES) are compositionally biased toward basic and acidic residues. One can recognise an F-box domain in the interval 112-173 (KMVLPWEIQH…CLPKLYYAPA (62 aa)).

As to quaternary structure, interacts with SKP1. Component of the probable SCF(YDR306C) complex containing CDC53, SKP1, RBX1 and YDR306C. Post-translationally, autoubiquitinated by the E3 ubiquitin ligase complex in conjunction with the E2 enzyme CDC34.

Its pathway is protein modification; protein ubiquitination. Its function is as follows. Substrate recognition component of a SCF (SKP1-CUL1-F-box protein) E3 ubiquitin-protein ligase complex which mediates the ubiquitination and subsequent proteasomal degradation of target proteins. Probably recognizes and binds to phosphorylated target proteins. In Saccharomyces cerevisiae (strain ATCC 204508 / S288c) (Baker's yeast), this protein is F-box protein YDR306C.